A 358-amino-acid chain; its full sequence is Alternative oxidase, mitochondrial (358 aa).

A helical transmembrane segment spans residues 152–172 (LIRMVFLESVAGVPGMVAGML). Residues Glu159, Glu198, and His201 each coordinate Fe cation. Residues 217–237 (FMIIGAQGVFFNSMFLSYLIS) traverse the membrane as a helical segment. Fe cation-binding residues include Glu249, Glu250, Glu306, and His309.

It belongs to the alternative oxidase family. Requires Fe cation as cofactor.

The protein resides in the mitochondrion inner membrane. Catalyzes cyanide-resistant oxygen consumption. May increase respiration when the cytochrome respiratory pathway is restricted, or in response to low temperatures. The chain is Alternative oxidase, mitochondrial from Blumeria graminis (Powdery mildew).